We begin with the raw amino-acid sequence, 339 residues long: AB hydrolase superfamily protein B1A11.02 (339 aa).

The protein belongs to the AB hydrolase superfamily.

In Schizosaccharomyces pombe (strain 972 / ATCC 24843) (Fission yeast), this protein is AB hydrolase superfamily protein B1A11.02.